We begin with the raw amino-acid sequence, 209 residues long: tRNA (guanine-N(7)-)-methyltransferase (209 aa).

Residues Asp35, Glu60, Asn87, and Asp113 each contribute to the S-adenosyl-L-methionine site. Residue Asp113 is part of the active site. Substrate contacts are provided by Lys117 and Asp149.

The protein belongs to the class I-like SAM-binding methyltransferase superfamily. TrmB family.

The enzyme catalyses guanosine(46) in tRNA + S-adenosyl-L-methionine = N(7)-methylguanosine(46) in tRNA + S-adenosyl-L-homocysteine. The protein operates within tRNA modification; N(7)-methylguanine-tRNA biosynthesis. Its function is as follows. Catalyzes the formation of N(7)-methylguanine at position 46 (m7G46) in tRNA. In Prochlorococcus marinus (strain AS9601), this protein is tRNA (guanine-N(7)-)-methyltransferase.